Here is a 316-residue protein sequence, read N- to C-terminus: Acetyl-coenzyme A carboxylase carboxyl transferase subunit alpha (316 aa).

A CoA carboxyltransferase C-terminal domain is found at 40–293; the sequence is LEKRSRDALR…GDLIAKTMKE (254 aa).

It belongs to the AccA family. Acetyl-CoA carboxylase is a heterohexamer composed of biotin carboxyl carrier protein (AccB), biotin carboxylase (AccC) and two subunits each of ACCase subunit alpha (AccA) and ACCase subunit beta (AccD).

It is found in the cytoplasm. The enzyme catalyses N(6)-carboxybiotinyl-L-lysyl-[protein] + acetyl-CoA = N(6)-biotinyl-L-lysyl-[protein] + malonyl-CoA. It functions in the pathway lipid metabolism; malonyl-CoA biosynthesis; malonyl-CoA from acetyl-CoA: step 1/1. Functionally, component of the acetyl coenzyme A carboxylase (ACC) complex. First, biotin carboxylase catalyzes the carboxylation of biotin on its carrier protein (BCCP) and then the CO(2) group is transferred by the carboxyltransferase to acetyl-CoA to form malonyl-CoA. The sequence is that of Acetyl-coenzyme A carboxylase carboxyl transferase subunit alpha from Mesorhizobium japonicum (strain LMG 29417 / CECT 9101 / MAFF 303099) (Mesorhizobium loti (strain MAFF 303099)).